The sequence spans 138 residues: Large ribosomal subunit protein uL16 (138 aa).

The segment covering 1–17 (MLIPRRVKHRKQHHPTR) has biased composition (basic residues). A disordered region spans residues 1 to 24 (MLIPRRVKHRKQHHPTRRGAASGG).

It belongs to the universal ribosomal protein uL16 family. Part of the 50S ribosomal subunit.

Its function is as follows. Binds 23S rRNA and is also seen to make contacts with the A and possibly P site tRNAs. The chain is Large ribosomal subunit protein uL16 from Kineococcus radiotolerans (strain ATCC BAA-149 / DSM 14245 / SRS30216).